A 220-amino-acid polypeptide reads, in one-letter code: 3-keto-L-gulonate-6-phosphate decarboxylase SgbH (220 aa).

Residue Asp-11 participates in substrate binding. Residues Glu-33 and Asp-62 each coordinate Mg(2+). Arg-192 provides a ligand contact to substrate.

Belongs to the HPS/KGPDC family. KGPDC subfamily. Homodimer. Mg(2+) serves as cofactor.

The enzyme catalyses 3-dehydro-L-gulonate 6-phosphate + H(+) = L-xylulose 5-phosphate + CO2. In terms of biological role, catalyzes the decarboxylation of 3-keto-L-gulonate-6-P into L-xylulose-5-P. May be involved in the utilization of 2,3-diketo-L-gulonate. The polypeptide is 3-keto-L-gulonate-6-phosphate decarboxylase SgbH (sgbH) (Escherichia coli (strain K12)).